Consider the following 569-residue polypeptide: Mitogen-activated protein kinase 8 (569 aa).

A Protein kinase domain is found at 13 to 304; it reads YKIQEVIGKG…AEEALADPYF (292 aa). ATP-binding positions include 19–27 and K42; that span reads IGKGSYGVV. D139 functions as the Proton acceptor in the catalytic mechanism. T175 bears the Phosphothreonine mark. A TXY motif is present at residues 175-177; sequence TDY. At Y177 the chain carries Phosphotyrosine. Positions 404–432 are disordered; the sequence is TTVHSAPIPPKDHQNITSQVPQRIPGRTG.

The protein belongs to the protein kinase superfamily. CMGC Ser/Thr protein kinase family. MAP kinase subfamily. Post-translationally, dually phosphorylated on Thr-175 and Tyr-177, which activates the enzyme. Expressed in leaves and panicles.

It carries out the reaction L-seryl-[protein] + ATP = O-phospho-L-seryl-[protein] + ADP + H(+). The catalysed reaction is L-threonyl-[protein] + ATP = O-phospho-L-threonyl-[protein] + ADP + H(+). Activated by threonine and tyrosine phosphorylation. This is Mitogen-activated protein kinase 8 (MPK8) from Oryza sativa subsp. japonica (Rice).